A 432-amino-acid chain; its full sequence is MGNNVVVLGTQWGDEGKGKIVDLLTERAKYVVRYQGGHNAGHTLVINGEKTVLHLIPSGILRENVTSIIGNGVVLSPSALMKEMKELEDRGIPVRERLLLSEACPLILDYHVALDNAREKARGAKAIGTTGRGIGPAYEDKVARRGLRVGDLFDKETFAEKLKEVMEYHNFQLVNYYKVEAVDYQKVLDDTMAVADILTSMVVDVSDLLDQARQRGDFVMFEGAQGTLLDIDHGTYPYVTSSNTTAGGVATGSGLGPRYVDYVLGILKAYSTRVGAGPFPTELFDETGEFLCKQGNEYGATTGRRRRTGWLDTVAVRRAVQLNSLSGFCLTKLDVLDGLKEVKLCVAYRMPDGREVTTTPLAADDWKGVEPIYETMPGWSESTFGVKDRSGLPQAALNYIKRIEELTGVPIDIISTGPDRTETMILRDPFDA.

Residues 13 to 19 (GDEGKGK) and 41 to 43 (GHT) each bind GTP. The Proton acceptor role is filled by D14. Positions 14 and 41 each coordinate Mg(2+). Residues 14–17 (DEGK), 39–42 (NAGH), T130, R144, Q225, T240, and R304 each bind IMP. Catalysis depends on H42, which acts as the Proton donor. 300–306 (ATTGRRR) provides a ligand contact to substrate. GTP is bound by residues R306, 332–334 (KLD), and 415–417 (STG).

It belongs to the adenylosuccinate synthetase family. As to quaternary structure, homodimer. The cofactor is Mg(2+).

The protein localises to the cytoplasm. The catalysed reaction is IMP + L-aspartate + GTP = N(6)-(1,2-dicarboxyethyl)-AMP + GDP + phosphate + 2 H(+). The protein operates within purine metabolism; AMP biosynthesis via de novo pathway; AMP from IMP: step 1/2. Plays an important role in the de novo pathway of purine nucleotide biosynthesis. Catalyzes the first committed step in the biosynthesis of AMP from IMP. The protein is Adenylosuccinate synthetase of Salmonella paratyphi A (strain AKU_12601).